Consider the following 588-residue polypeptide: Adenylate kinase 5, chloroplastic (588 aa).

Positions 1–34 are disordered; the sequence is MASLSLSSAHFSSTSSSSRSSISTSSLSPSSTSL. The N-terminal 73 residues, 1–73, are a transit peptide targeting the chloroplast; the sequence is MASLSLSSAH…SFSTSNSQIR (73 aa). 89–94 contributes to the ATP binding site; sequence ASGKGT. Positions 109–138 are NMP; that stretch reads STGDLLRAEVSSGTDIGKRAKEFMNSGSLV. Residues Arg-115, 136–138, 165–168, and Gln-172 each bind AMP; these read SLV and GFPR. The tract at residues 202–235 is LID; it reads GRRLDPVTGKIYHIKNYPPESDEIKARLVTRPDD. Position 203 (Arg-203) interacts with ATP. AMP is bound by residues Arg-232 and Arg-243.

Belongs to the adenylate kinase family. Monomer.

It is found in the plastid. It localises to the chloroplast. It carries out the reaction AMP + ATP = 2 ADP. In terms of biological role, catalyzes the reversible transfer of the terminal phosphate group between ATP and AMP. This is Adenylate kinase 5, chloroplastic from Arabidopsis thaliana (Mouse-ear cress).